A 557-amino-acid polypeptide reads, in one-letter code: 2-succinyl-5-enolpyruvyl-6-hydroxy-3-cyclohexene-1-carboxylate synthase (557 aa).

Belongs to the TPP enzyme family. MenD subfamily. As to quaternary structure, homodimer. Requires Mg(2+) as cofactor. Mn(2+) serves as cofactor. The cofactor is thiamine diphosphate.

The enzyme catalyses isochorismate + 2-oxoglutarate + H(+) = 5-enolpyruvoyl-6-hydroxy-2-succinyl-cyclohex-3-ene-1-carboxylate + CO2. It participates in quinol/quinone metabolism; 1,4-dihydroxy-2-naphthoate biosynthesis; 1,4-dihydroxy-2-naphthoate from chorismate: step 2/7. Its pathway is quinol/quinone metabolism; menaquinone biosynthesis. Its function is as follows. Catalyzes the thiamine diphosphate-dependent decarboxylation of 2-oxoglutarate and the subsequent addition of the resulting succinic semialdehyde-thiamine pyrophosphate anion to isochorismate to yield 2-succinyl-5-enolpyruvyl-6-hydroxy-3-cyclohexene-1-carboxylate (SEPHCHC). The chain is 2-succinyl-5-enolpyruvyl-6-hydroxy-3-cyclohexene-1-carboxylate synthase from Yersinia enterocolitica serotype O:8 / biotype 1B (strain NCTC 13174 / 8081).